The primary structure comprises 469 residues: 3-isopropylmalate dehydratase large subunit (469 aa).

The [4Fe-4S] cluster site is built by Cys-349, Cys-410, and Cys-413.

This sequence belongs to the aconitase/IPM isomerase family. LeuC type 1 subfamily. As to quaternary structure, heterodimer of LeuC and LeuD. It depends on [4Fe-4S] cluster as a cofactor.

The enzyme catalyses (2R,3S)-3-isopropylmalate = (2S)-2-isopropylmalate. It functions in the pathway amino-acid biosynthesis; L-leucine biosynthesis; L-leucine from 3-methyl-2-oxobutanoate: step 2/4. Catalyzes the isomerization between 2-isopropylmalate and 3-isopropylmalate, via the formation of 2-isopropylmaleate. This chain is 3-isopropylmalate dehydratase large subunit, found in Neisseria meningitidis serogroup B (strain ATCC BAA-335 / MC58).